Here is a 312-residue protein sequence, read N- to C-terminus: G-protein coupled receptor BILF1 (312 aa).

Residues 1-40 lie on the Extracellular side of the membrane; the sequence is MLSTMAPGSTVGTLVANMTSVNATEDACTKSYSAFLSGMT. 2 disulfides stabilise this stretch: Cys28-Cys258 and Cys97-Cys174. A helical membrane pass occupies residues 41–61; that stretch reads SLLLVLLILLTLAGILFIIFV. The Cytoplasmic portion of the chain corresponds to 62-67; sequence RKLVHR. Residues 68 to 88 traverse the membrane as a helical segment; that stretch reads MDVWLIALLIELLLWVLGKMI. Residues 89–95 lie on the Extracellular side of the membrane; the sequence is QEFSSTG. Residues 96 to 116 traverse the membrane as a helical segment; sequence LCLLTQNMMFLGLMCSVWTHL. Residues 117–138 lie on the Cytoplasmic side of the membrane; that stretch reads GMALEKTLALFSRTPKRTSHRN. Residues 139 to 159 traverse the membrane as a helical segment; sequence VCLYLMGVFCLVLLLIIILLI. At 160–192 the chain is on the extracellular side; that stretch reads TMGPDANLNRGPNMCREGPTKGMHTAVQGLKAG. A helical transmembrane segment spans residues 193–213; that stretch reads CYLLAAVLIVLLTVIIIWKLL. Topologically, residues 214 to 228 are cytoplasmic; that stretch reads RTKFGRKPRLICNVT. A helical transmembrane segment spans residues 229–249; sequence FTGLICAFSWFMLSLPLLFLG. Topologically, residues 250–269 are extracellular; that stretch reads EAGSLGFDCTESLVARYYPG. A helical membrane pass occupies residues 270-290; sequence PAACLALLLIILYAWSFSHFM. The Cytoplasmic portion of the chain corresponds to 291-312; the sequence is DSLKNQVTVTARYFRRVPSQST.

Belongs to the Epstein-Barr virus BILF1 protein family. As to quaternary structure, interacts with host CXCR4 to form higher-order heterooligomers. Interacts with host Gi heterotrimer.

The protein localises to the host cell membrane. It is found in the host mitochondrion outer membrane. Its function is as follows. Constitutively active, ligand-independent G protein-coupled receptor that has immunoevasive and oncogenic activities. Couples with the host inhibitory G protein (Gi) in order to disrupt the host chemokine signaling. As a consequence of its constitutive activity, mediates host CXCR4 inhibition. Enhances degradation of host major histocompatibility complex class I antigens via lysosomes, thereby modulating the antigen presentation to cytotoxic T cells. Targets selectively HLA-A, HLA-Band HLA-E molecules. Targets also newly synthesized MHC-I/peptide complexes en route to the host cell surface. Inhibits the host EIF2AK2/PKR phosphorylation. Displays tranforming activity. Utilizes its C-terminal tail to trigger host MAVS UFMylation via PARK2, resulting in selective MAVS removal from mitochondrial membranes and routing to lysosomes to prevent viral activation of the NLRP3 inflammasome. The sequence is that of G-protein coupled receptor BILF1 from Homo sapiens (Human).